A 518-amino-acid polypeptide reads, in one-letter code: Gypsy retrotransposon integrase-like protein 1 (518 aa).

The Integrase catalytic domain maps to 135–293; sequence VVGNPWSVVT…PYFQMFNRNP (159 aa). Residues 326 to 348 form a disordered region; the sequence is NQTPAAGQMESSTSEELSKSKVA. A Phosphoserine modification is found at S498.

This Rattus norvegicus (Rat) protein is Gypsy retrotransposon integrase-like protein 1 (GIN1).